The chain runs to 413 residues: Aspartate aminotransferase, cytoplasmic (413 aa).

Gly39 and Trp141 together coordinate L-aspartate. The residue at position 149 (Ser149) is a Phosphoserine. Asn195 contributes to the L-aspartate binding site. Position 259 is an N6-(pyridoxal phosphate)lysine (Lys259). Arg387 contributes to the L-aspartate binding site.

Belongs to the class-I pyridoxal-phosphate-dependent aminotransferase family. Homodimer. Pyridoxal 5'-phosphate serves as cofactor.

It is found in the cytoplasm. It catalyses the reaction L-aspartate + 2-oxoglutarate = oxaloacetate + L-glutamate. It carries out the reaction L-cysteine + 2-oxoglutarate = 2-oxo-3-sulfanylpropanoate + L-glutamate. The enzyme catalyses (2S)-2-aminobutanoate + 2-oxoglutarate = 2-oxobutanoate + L-glutamate. The catalysed reaction is 3-sulfino-L-alanine + 2-oxoglutarate = 3-sulfinopyruvate + L-glutamate. Biosynthesis of L-glutamate from L-aspartate or L-cysteine. Important regulator of levels of glutamate, the major excitatory neurotransmitter of the vertebrate central nervous system. Acts as a scavenger of glutamate in brain neuroprotection. The aspartate aminotransferase activity is involved in hepatic glucose synthesis during development and in adipocyte glyceroneogenesis. Using L-cysteine as substrate, regulates levels of mercaptopyruvate, an important source of hydrogen sulfide. Mercaptopyruvate is converted into H(2)S via the action of 3-mercaptopyruvate sulfurtransferase (3MST). Hydrogen sulfide is an important synaptic modulator and neuroprotectant in the brain. In addition, catalyzes (2S)-2-aminobutanoate, a by-product in the cysteine biosynthesis pathway. This Homo sapiens (Human) protein is Aspartate aminotransferase, cytoplasmic.